Here is a 130-residue protein sequence, read N- to C-terminus: Transcription antitermination protein NusB (130 aa).

It belongs to the NusB family.

Functionally, involved in transcription antitermination. Required for transcription of ribosomal RNA (rRNA) genes. Binds specifically to the boxA antiterminator sequence of the ribosomal RNA (rrn) operons. The protein is Transcription antitermination protein NusB of Sulfurovum sp. (strain NBC37-1).